The chain runs to 131 residues: Urease subunit beta (131 aa).

Residues 100–131 form a disordered region; that stretch reads PLDPAAGVTSDEDAASAVVPRGAETSEREARA.

It belongs to the urease beta subunit family. Heterotrimer of UreA (gamma), UreB (beta) and UreC (alpha) subunits. Three heterotrimers associate to form the active enzyme.

The protein localises to the cytoplasm. The enzyme catalyses urea + 2 H2O + H(+) = hydrogencarbonate + 2 NH4(+). It participates in nitrogen metabolism; urea degradation; CO(2) and NH(3) from urea (urease route): step 1/1. This chain is Urease subunit beta, found in Kocuria rhizophila (strain ATCC 9341 / DSM 348 / NBRC 103217 / DC2201).